Here is a 428-residue protein sequence, read N- to C-terminus: Putative UDP-glucose 6-dehydrogenase YtcA (428 aa).

The N-terminal stretch at methionine 1–glycine 23 is a signal peptide. NAD(+)-binding positions include lysine 2–leucine 19, valine 11, aspartate 30, lysine 35, threonine 118, and glutamate 152. Substrate-binding positions include glutamate 148 to glutamate 152, lysine 203, asparagine 207, phenylalanine 248 to glycine 252, and glycine 256. Residue cysteine 259 is the Nucleophile of the active site. An NAD(+)-binding site is contributed by lysine 262. Lysine 319 provides a ligand contact to substrate. Arginine 326 is an NAD(+) binding site.

It belongs to the UDP-glucose/GDP-mannose dehydrogenase family.

The enzyme catalyses UDP-alpha-D-glucose + 2 NAD(+) + H2O = UDP-alpha-D-glucuronate + 2 NADH + 3 H(+). It functions in the pathway nucleotide-sugar biosynthesis; UDP-alpha-D-glucuronate biosynthesis; UDP-alpha-D-glucuronate from UDP-alpha-D-glucose: step 1/1. Functionally, catalyzes the conversion of UDP-glucose into UDP-glucuronate, one of the precursors of teichuronic acid. The sequence is that of Putative UDP-glucose 6-dehydrogenase YtcA (ytcA) from Bacillus subtilis (strain 168).